A 187-amino-acid chain; its full sequence is Elongation factor P (187 aa).

Belongs to the elongation factor P family.

The protein resides in the cytoplasm. It participates in protein biosynthesis; polypeptide chain elongation. Functionally, involved in peptide bond synthesis. Stimulates efficient translation and peptide-bond synthesis on native or reconstituted 70S ribosomes in vitro. Probably functions indirectly by altering the affinity of the ribosome for aminoacyl-tRNA, thus increasing their reactivity as acceptors for peptidyl transferase. In Syntrophus aciditrophicus (strain SB), this protein is Elongation factor P.